The primary structure comprises 60 residues: Large ribosomal subunit protein bL32 (60 aa).

The segment at 1–23 (MAVPKRKKSKSRRNMHRSHHAIK) is disordered.

It belongs to the bacterial ribosomal protein bL32 family.

The polypeptide is Large ribosomal subunit protein bL32 (Wolbachia pipientis subsp. Culex pipiens (strain wPip)).